A 425-amino-acid chain; its full sequence is Serine--tRNA ligase (425 aa).

Thr228–Glu230 is a binding site for L-serine. An ATP-binding site is contributed by Arg259–Glu261. Glu282 serves as a coordination point for L-serine. Residue Glu346–Ser349 participates in ATP binding. Ser382 lines the L-serine pocket.

It belongs to the class-II aminoacyl-tRNA synthetase family. Type-1 seryl-tRNA synthetase subfamily. As to quaternary structure, homodimer. The tRNA molecule binds across the dimer.

The protein resides in the cytoplasm. It catalyses the reaction tRNA(Ser) + L-serine + ATP = L-seryl-tRNA(Ser) + AMP + diphosphate + H(+). The catalysed reaction is tRNA(Sec) + L-serine + ATP = L-seryl-tRNA(Sec) + AMP + diphosphate + H(+). It functions in the pathway aminoacyl-tRNA biosynthesis; selenocysteinyl-tRNA(Sec) biosynthesis; L-seryl-tRNA(Sec) from L-serine and tRNA(Sec): step 1/1. Functionally, catalyzes the attachment of serine to tRNA(Ser). Is also able to aminoacylate tRNA(Sec) with serine, to form the misacylated tRNA L-seryl-tRNA(Sec), which will be further converted into selenocysteinyl-tRNA(Sec). This chain is Serine--tRNA ligase, found in Rickettsia akari (strain Hartford).